A 903-amino-acid polypeptide reads, in one-letter code: Protein translocase subunit SecA (903 aa).

ATP is bound by residues glutamine 87, 105-109, and aspartate 507; that span reads GEGKT. 2 disordered regions span residues 565 to 584 and 855 to 877; these read ESRR…GDPG and AEPG…LASQ. Cysteine 887, cysteine 889, cysteine 898, and histidine 899 together coordinate Zn(2+).

It belongs to the SecA family. In terms of assembly, monomer and homodimer. Part of the essential Sec protein translocation apparatus which comprises SecA, SecYEG and auxiliary proteins SecDF-YajC and YidC. Requires Zn(2+) as cofactor.

The protein localises to the cell inner membrane. It localises to the cytoplasm. The enzyme catalyses ATP + H2O + cellular proteinSide 1 = ADP + phosphate + cellular proteinSide 2.. In terms of biological role, part of the Sec protein translocase complex. Interacts with the SecYEG preprotein conducting channel. Has a central role in coupling the hydrolysis of ATP to the transfer of proteins into and across the cell membrane, serving both as a receptor for the preprotein-SecB complex and as an ATP-driven molecular motor driving the stepwise translocation of polypeptide chains across the membrane. The chain is Protein translocase subunit SecA from Chromobacterium violaceum (strain ATCC 12472 / DSM 30191 / JCM 1249 / CCUG 213 / NBRC 12614 / NCIMB 9131 / NCTC 9757 / MK).